A 183-amino-acid chain; its full sequence is Ribosome-binding factor A (183 aa).

A disordered region spans residues 132 to 183 (PAGEADPYRDNGSVAQSPAPGGLGIRTSDGPEAVEAPLTCGGDTGDDDRPKE).

Belongs to the RbfA family. As to quaternary structure, monomer. Binds 30S ribosomal subunits, but not 50S ribosomal subunits or 70S ribosomes.

Its subcellular location is the cytoplasm. One of several proteins that assist in the late maturation steps of the functional core of the 30S ribosomal subunit. Associates with free 30S ribosomal subunits (but not with 30S subunits that are part of 70S ribosomes or polysomes). Required for efficient processing of 16S rRNA. May interact with the 5'-terminal helix region of 16S rRNA. This Mycobacterium tuberculosis (strain ATCC 25177 / H37Ra) protein is Ribosome-binding factor A.